The sequence spans 341 residues: tRNA N6-adenosine threonylcarbamoyltransferase (341 aa).

Histidine 110 and histidine 114 together coordinate Fe cation. Residues 133–137, aspartate 166, glycine 179, and asparagine 276 each bind substrate; that span reads LVSGG. Aspartate 304 is a binding site for Fe cation.

The protein belongs to the KAE1 / TsaD family. Fe(2+) is required as a cofactor.

Its subcellular location is the cytoplasm. The catalysed reaction is L-threonylcarbamoyladenylate + adenosine(37) in tRNA = N(6)-L-threonylcarbamoyladenosine(37) in tRNA + AMP + H(+). In terms of biological role, required for the formation of a threonylcarbamoyl group on adenosine at position 37 (t(6)A37) in tRNAs that read codons beginning with adenine. Is involved in the transfer of the threonylcarbamoyl moiety of threonylcarbamoyl-AMP (TC-AMP) to the N6 group of A37, together with TsaE and TsaB. TsaD likely plays a direct catalytic role in this reaction. The polypeptide is tRNA N6-adenosine threonylcarbamoyltransferase (Saccharophagus degradans (strain 2-40 / ATCC 43961 / DSM 17024)).